The primary structure comprises 404 residues: POU domain, class 2, transcription factor 3L (404 aa).

Disordered stretches follow at residues 1-29 (MNRE…TLDF) and 44-67 (TGIP…MTGE). The span at 16–29 (GHLENDAERDTLDF) shows a compositional bias: basic and acidic residues. The POU-specific domain occupies 187–235 (QGDVGLAMGKLYGNDFSQTTISRFEALNLSFKNMCKLKPLLEKWLNDAE). Positions 259–297 (KRKKRTSIETNIRLTLEKRFQDNPKPSSEEISMIAEQLV) form a DNA-binding region, homeobox. Residues 346 to 367 (MTVTSSCSPGNSSRPSSPTCGL) are disordered. Positions 350–363 (SSCSPGNSSRPSSP) are enriched in low complexity.

The protein belongs to the POU transcription factor family. Class-2 subfamily.

The protein resides in the nucleus. Functionally, transcription factor that binds to the octamer motif (5'-ATTTGCAT-3') and regulates cell type-specific differentiation pathways. The polypeptide is POU domain, class 2, transcription factor 3L (pou2f3.L) (Xenopus laevis (African clawed frog)).